Reading from the N-terminus, the 480-residue chain is Adenylosuccinate synthetase, chloroplastic (480 aa).

A chloroplast-targeting transit peptide spans 1–54; sequence MATARVMVADRARAFGGTTATRARRDDQGRRVTIARGIPSRARVVVARASERAY. GTP contacts are provided by residues 69–75 and 97–99; these read GDEGKGK and GHT. The active-site Proton acceptor is aspartate 70. The Mg(2+) site is built by aspartate 70 and glycine 97. IMP contacts are provided by residues 70–73, 95–98, threonine 187, arginine 201, asparagine 278, threonine 293, and arginine 357; these read DEGK and NAGH. Catalysis depends on histidine 98, which acts as the Proton donor. Residue 353 to 359 participates in substrate binding; the sequence is TTTGRPR. GTP contacts are provided by residues arginine 359, 385 to 387, and 468 to 470; these read KLD and GVG.

The protein belongs to the adenylosuccinate synthetase family. As to quaternary structure, homodimer. Requires Mg(2+) as cofactor.

It localises to the plastid. The protein localises to the chloroplast. The enzyme catalyses IMP + L-aspartate + GTP = N(6)-(1,2-dicarboxyethyl)-AMP + GDP + phosphate + 2 H(+). The protein operates within purine metabolism; AMP biosynthesis via de novo pathway; AMP from IMP: step 1/2. Functionally, plays an important role in the de novo pathway and in the salvage pathway of purine nucleotide biosynthesis. Catalyzes the first committed step in the biosynthesis of AMP from IMP. This is Adenylosuccinate synthetase, chloroplastic from Ostreococcus tauri.